The following is a 175-amino-acid chain: Protein-export protein SecB (175 aa).

Residues 153–163 are compositionally biased toward polar residues; the sequence is QQQPDAANGND. A disordered region spans residues 153–175; that stretch reads QQQPDAANGNDSGIILPPGATRQ.

The protein belongs to the SecB family. Homotetramer, a dimer of dimers. One homotetramer interacts with 1 SecA dimer.

The protein localises to the cytoplasm. In terms of biological role, one of the proteins required for the normal export of preproteins out of the cell cytoplasm. It is a molecular chaperone that binds to a subset of precursor proteins, maintaining them in a translocation-competent state. It also specifically binds to its receptor SecA. The sequence is that of Protein-export protein SecB from Bordetella bronchiseptica (strain ATCC BAA-588 / NCTC 13252 / RB50) (Alcaligenes bronchisepticus).